The primary structure comprises 348 residues: MAFTYWDKEKRMTLKQMIQQVTINEQENELTHYVFTTPMSMPTFGKPMLGYVPLNEVATSKFFSNVNDFDRDNQLAMAHFQDTTITRAYNLTNSIKPGDTSLPDAEVAALKWFWKFFTSINLVRQPPMDNVLYWACQFLSSGTSFLPLEKDVEIVFSGFQGSHTCMFASLRQMNLSPILCPYYEHMTNFKTTAEIREYVDANEELKSLITYLCLCTIVGLCDTFVETRNMETGEYVWKVSNVVSDNHTPAQNIGKFCYTTQNAKYMIQLVHVLLFPLTDNKYADLPNYVAVITQGAINQSLPRNVVNNNEGSNSDTTTDTAPSTSGIVSGSADTVASLYPDEFKYVQS.

A disordered region spans residues 303–331 (RNVVNNNEGSNSDTTTDTAPSTSGIVSGS). Residues 312-325 (SNSDTTTDTAPSTS) are compositionally biased toward low complexity.

This is an uncharacterized protein from Aedes pseudoscutellaris reovirus (isolate France) (ApRV).